A 415-amino-acid polypeptide reads, in one-letter code: Isocitrate dehydrogenase [NADP] 1 (415 aa).

Threonine 104 provides a ligand contact to NADP(+). The D-threo-isocitrate site is built by serine 113, asparagine 115, arginine 119, arginine 129, and arginine 153. A Mg(2+)-binding site is contributed by aspartate 307. Residues 339–345 (HGTAPKY), asparagine 352, tyrosine 390, and arginine 394 contribute to the NADP(+) site.

The protein belongs to the isocitrate and isopropylmalate dehydrogenases family. In terms of assembly, homodimer. Mg(2+) serves as cofactor. It depends on Mn(2+) as a cofactor.

It catalyses the reaction D-threo-isocitrate + NADP(+) = 2-oxoglutarate + CO2 + NADPH. Functionally, catalyzes the oxidative decarboxylation of isocitrate to 2-oxoglutarate and carbon dioxide with the concomitant reduction of NADP(+). The chain is Isocitrate dehydrogenase [NADP] 1 from Colwellia maris.